A 145-amino-acid chain; its full sequence is Flagellar assembly factor FliW (145 aa).

This sequence belongs to the FliW family. In terms of assembly, interacts with translational regulator CsrA and flagellin(s).

The protein resides in the cytoplasm. Functionally, acts as an anti-CsrA protein, binds CsrA and prevents it from repressing translation of its target genes, one of which is flagellin. Binds to flagellin and participates in the assembly of the flagellum. The polypeptide is Flagellar assembly factor FliW (Clostridium tetani (strain Massachusetts / E88)).